We begin with the raw amino-acid sequence, 460 residues long: Probable protein phosphatase 2C 38 (460 aa).

2 disordered regions span residues 1-30 (MVAVTGGRPPGLQDAPGAPPPAPAAEAVPS) and 83-111 (RPMRRRRRGGSSSSSSSPRDREPRDGRIA). The span at 100–109 (PRDREPRDGR) shows a compositional bias: basic and acidic residues. One can recognise a PPM-type phosphatase domain in the interval 118–432 (AASLYTMRGN…DDCAVVCLFL (315 aa)). Residues Asp-154 and Gly-155 each contribute to the Mn(2+) site. Positions 192–219 (VTSSMTEGGGTERMDRDTETPLGTEENG) are disordered. Over residues 201–210 (GTERMDRDTE) the composition is skewed to basic and acidic residues. Asp-377 and Asp-423 together coordinate Mn(2+).

Belongs to the PP2C family. Requires Mg(2+) as cofactor. It depends on Mn(2+) as a cofactor.

It carries out the reaction O-phospho-L-seryl-[protein] + H2O = L-seryl-[protein] + phosphate. The catalysed reaction is O-phospho-L-threonyl-[protein] + H2O = L-threonyl-[protein] + phosphate. The sequence is that of Probable protein phosphatase 2C 38 from Oryza sativa subsp. japonica (Rice).